Consider the following 215-residue polypeptide: Cytochrome b6 (215 aa).

A helical transmembrane segment spans residues 32-52 (IFYCLGGITLTCFLVQVATGF). C35 contributes to the heme c binding site. Heme b-binding residues include H86 and H100. A run of 3 helical transmembrane segments spans residues 90–110 (ASMM…TGGF), 116–136 (LTWV…VTGY), and 186–206 (LHTF…FPMI). Residues H187 and H202 each coordinate heme b.

Belongs to the cytochrome b family. PetB subfamily. The 4 large subunits of the cytochrome b6-f complex are cytochrome b6, subunit IV (17 kDa polypeptide, PetD), cytochrome f and the Rieske protein, while the 4 small subunits are PetG, PetL, PetM and PetN. The complex functions as a dimer. Heme b serves as cofactor. Requires heme c as cofactor.

Its subcellular location is the plastid. It is found in the chloroplast thylakoid membrane. Component of the cytochrome b6-f complex, which mediates electron transfer between photosystem II (PSII) and photosystem I (PSI), cyclic electron flow around PSI, and state transitions. The chain is Cytochrome b6 from Daucus carota (Wild carrot).